Here is a 419-residue protein sequence, read N- to C-terminus: UDP-N-acetylglucosamine 1-carboxyvinyltransferase (419 aa).

22–23 is a phosphoenolpyruvate binding site; that stretch reads KN. Arginine 91 serves as a coordination point for UDP-N-acetyl-alpha-D-glucosamine. Cysteine 115 serves as the catalytic Proton donor. Position 115 is a 2-(S-cysteinyl)pyruvic acid O-phosphothioketal (cysteine 115). UDP-N-acetyl-alpha-D-glucosamine contacts are provided by residues 120–124, 160–163, aspartate 305, and isoleucine 327; these read RPVDL and KVSV.

The protein belongs to the EPSP synthase family. MurA subfamily.

Its subcellular location is the cytoplasm. It catalyses the reaction phosphoenolpyruvate + UDP-N-acetyl-alpha-D-glucosamine = UDP-N-acetyl-3-O-(1-carboxyvinyl)-alpha-D-glucosamine + phosphate. It functions in the pathway cell wall biogenesis; peptidoglycan biosynthesis. In terms of biological role, cell wall formation. Adds enolpyruvyl to UDP-N-acetylglucosamine. In Cronobacter sakazakii (strain ATCC BAA-894) (Enterobacter sakazakii), this protein is UDP-N-acetylglucosamine 1-carboxyvinyltransferase.